Reading from the N-terminus, the 398-residue chain is uncharacterized protein (398 aa).

A run of 6 helical transmembrane segments spans residues 37 to 57 (LVIL…FVQF), 92 to 112 (IFNA…FIFG), 122 to 142 (LLTL…SYIP), 186 to 206 (LFYG…ILII), 228 to 248 (IGGI…VIGT), and 268 to 288 (FGVA…NIVL).

The protein localises to the cell membrane. This is an uncharacterized protein from Mycoplasma genitalium (strain ATCC 33530 / DSM 19775 / NCTC 10195 / G37) (Mycoplasmoides genitalium).